Reading from the N-terminus, the 71-residue chain is Ubiquinol-cytochrome c reductase complex assembly factor 6 (71 aa).

At 1 to 8 (MPAGVPMS) the chain is on the mitochondrial matrix side. A helical; Signal-anchor for type II membrane protein membrane pass occupies residues 9 to 25 (TYLKMLAASLLAMCAGA). At 26–71 (EVVHRYYRPDLTIPEIPPKRGELKTELLGLKERKHKPQISQQEELK) the chain is on the mitochondrial intermembrane side. The interval 52–71 (LLGLKERKHKPQISQQEELK) is disordered.

The protein belongs to the UQCC6 family. In terms of assembly, interacts with UQCRC1. Interacts with UQCRQ. Interacts with UQCC5. Forms a complex, named COMB/coordinator of mitochondrial CYTB biogenesis, composed of UQCC1, UQCC2, UQCC4, UQCC5 and UQCC6; stabilizes nascent cytochrome b/MT-CYB and promotes its membrane insertion. Forms a complex, named COMA, composed of UQCC1, UQCC2 and UQCC4; activates MT-CYB translation. Forms a complex, named COMC, composed of UQCC1, UQCC2; UQCC3 and UQCC4; mediates MT-CYB hemylation and association with the first nuclear-encoded complex III subunit UQCRQ. Interacts with MT-CYB.

Its subcellular location is the mitochondrion inner membrane. Functionally, required for the assembly and stability of the mitochondrial ubiquinol-cytochrome c reductase complex (complex III (CIII) or cytochrome b-c1 complex), a multisubunit transmembrane complex that is part of the mitochondrial electron transport chain (ETC) which drives oxidative phosphorylation. Mediates early complex III biogenesis. Participates in regulating the levels of electron transport chain proteins, and therefore energy supply, in response to changes in energy demand. Also required for cytochrome c oxidase complex (complex IV) assembly. The chain is Ubiquinol-cytochrome c reductase complex assembly factor 6 from Pongo abelii (Sumatran orangutan).